A 113-amino-acid polypeptide reads, in one-letter code: Protein FMC1 homolog (113 aa).

A disordered region spans residues 94–113 (SAGLVGLKLPHQPGGKGWEP).

Belongs to the FMC1 family. Interacts with ATPAF2.

The protein resides in the mitochondrion. Plays a role in the assembly/stability of the mitochondrial membrane ATP synthase (F(1)F(0) ATP synthase or Complex V). This is Protein FMC1 homolog from Homo sapiens (Human).